A 219-amino-acid chain; its full sequence is 2,5-diamino-6-ribosylamino-4(3H)-pyrimidinone 5'-phosphate reductase (219 aa).

Residues Thr52, Asp56, 87-90 (SRCR), Val134, and 156-159 (GGTL) each bind NADP(+).

It belongs to the HTP reductase family. As to quaternary structure, homodimer.

The catalysed reaction is 2,5-diamino-6-(1-D-ribitylamino)pyrimidin-4(3H)-one 5'-phosphate + NADP(+) = 2,5-diamino-6-(1-D-ribosylamino)pyrimidin-4(3H)-one 5'-phosphate + NADPH + H(+). The enzyme catalyses 2,5-diamino-6-(1-D-ribitylamino)pyrimidin-4(3H)-one 5'-phosphate + NAD(+) = 2,5-diamino-6-(1-D-ribosylamino)pyrimidin-4(3H)-one 5'-phosphate + NADH + H(+). It participates in cofactor biosynthesis; riboflavin biosynthesis. In terms of biological role, catalyzes an early step in riboflavin biosynthesis, the NADPH-dependent reduction of the ribose side chain of 2,5-diamino-6-ribosylamino-4(3H)-pyrimidinone 5'-phosphate, yielding 2,5-diamino-6-ribitylamino-4(3H)-pyrimidinone 5'-phosphate. In Archaeoglobus fulgidus (strain ATCC 49558 / DSM 4304 / JCM 9628 / NBRC 100126 / VC-16), this protein is 2,5-diamino-6-ribosylamino-4(3H)-pyrimidinone 5'-phosphate reductase.